The sequence spans 481 residues: 3-isopropylmalate dehydratase large subunit (481 aa).

Residues Cys-357, Cys-417, and Cys-420 each coordinate [4Fe-4S] cluster. The segment covering 429 to 441 (SPGQRCASTSNRN) has biased composition (polar residues). Residues 429–451 (SPGQRCASTSNRNFEGRQGKGGR) are disordered.

It belongs to the aconitase/IPM isomerase family. LeuC type 1 subfamily. Heterodimer of LeuC and LeuD. It depends on [4Fe-4S] cluster as a cofactor.

The catalysed reaction is (2R,3S)-3-isopropylmalate = (2S)-2-isopropylmalate. It participates in amino-acid biosynthesis; L-leucine biosynthesis; L-leucine from 3-methyl-2-oxobutanoate: step 2/4. In terms of biological role, catalyzes the isomerization between 2-isopropylmalate and 3-isopropylmalate, via the formation of 2-isopropylmaleate. The sequence is that of 3-isopropylmalate dehydratase large subunit from Mycobacterium sp. (strain JLS).